The chain runs to 752 residues: Multifunctional tryptophan biosynthesis protein (752 aa).

The region spanning 3 to 202 (FTLLIDNYDS…IQMKGGKWGG (200 aa)) is the Glutamine amidotransferase type-1 domain. 58–60 (GPG) provides a ligand contact to L-glutamine. Cysteine 86 functions as the Nucleophile; for GATase activity in the catalytic mechanism. 136 to 137 (SL) provides a ligand contact to L-glutamine. Catalysis depends on for GATase activity residues histidine 176 and glutamate 178. Residues 231–495 (ILNKIHAQRL…DTKAFLRSLI (265 aa)) form an indole-3-glycerol phosphate synthase region. An N-(5'-phosphoribosyl)anthranilate isomerase region spans residues 509–752 (LVKICGIRST…VEAFVKAVRG (244 aa)).

The enzyme catalyses N-(5-phospho-beta-D-ribosyl)anthranilate = 1-(2-carboxyphenylamino)-1-deoxy-D-ribulose 5-phosphate. It carries out the reaction 1-(2-carboxyphenylamino)-1-deoxy-D-ribulose 5-phosphate + H(+) = (1S,2R)-1-C-(indol-3-yl)glycerol 3-phosphate + CO2 + H2O. The catalysed reaction is chorismate + L-glutamine = anthranilate + pyruvate + L-glutamate + H(+). It functions in the pathway amino-acid biosynthesis; L-tryptophan biosynthesis; L-tryptophan from chorismate: step 1/5. The protein operates within amino-acid biosynthesis; L-tryptophan biosynthesis; L-tryptophan from chorismate: step 3/5. Its pathway is amino-acid biosynthesis; L-tryptophan biosynthesis; L-tryptophan from chorismate: step 4/5. Its function is as follows. Trifunctional enzyme bearing the Gln amidotransferase (GATase) domain of anthranilate synthase, indole-glycerolphosphate synthase, and phosphoribosylanthranilate isomerase activities. The polypeptide is Multifunctional tryptophan biosynthesis protein (TRP1) (Cryptococcus neoformans var. grubii serotype A (strain H99 / ATCC 208821 / CBS 10515 / FGSC 9487) (Filobasidiella neoformans var. grubii)).